The chain runs to 330 residues: Aspartate--ammonia ligase (330 aa).

This sequence belongs to the class-II aminoacyl-tRNA synthetase family. AsnA subfamily.

The protein resides in the cytoplasm. It catalyses the reaction L-aspartate + NH4(+) + ATP = L-asparagine + AMP + diphosphate + H(+). It functions in the pathway amino-acid biosynthesis; L-asparagine biosynthesis; L-asparagine from L-aspartate (ammonia route): step 1/1. This Treponema pallidum (strain Nichols) protein is Aspartate--ammonia ligase.